The chain runs to 148 residues: uncharacterized protein (148 aa).

Residues 1–22 (MVQTVLNSVWLWRSVLLRLTFS) form the signal peptide.

This is an uncharacterized protein from Saccharomyces cerevisiae (strain ATCC 204508 / S288c) (Baker's yeast).